Here is a 410-residue protein sequence, read N- to C-terminus: Tryptophan synthase beta chain (410 aa).

An N6-(pyridoxal phosphate)lysine modification is found at lysine 100.

The protein belongs to the TrpB family. In terms of assembly, tetramer of two alpha and two beta chains. Pyridoxal 5'-phosphate is required as a cofactor.

The catalysed reaction is (1S,2R)-1-C-(indol-3-yl)glycerol 3-phosphate + L-serine = D-glyceraldehyde 3-phosphate + L-tryptophan + H2O. The protein operates within amino-acid biosynthesis; L-tryptophan biosynthesis; L-tryptophan from chorismate: step 5/5. Its function is as follows. The beta subunit is responsible for the synthesis of L-tryptophan from indole and L-serine. The sequence is that of Tryptophan synthase beta chain from Pyrobaculum aerophilum (strain ATCC 51768 / DSM 7523 / JCM 9630 / CIP 104966 / NBRC 100827 / IM2).